A 392-amino-acid chain; its full sequence is INCREASED PETAL GROWTH ANISOTROPY 1-like protein 1 (392 aa).

The stretch at 11–52 (LLRLVKELQAYLVRNDKLEKENHELRQEVARLRAQVSNLKSH) forms a coiled coil. 2 stretches are compositionally biased toward polar residues: residues 65 to 76 (QSSYDGSNTDGS) and 100 to 109 (PTIQGQSTAT). Residues 65–128 (QSSYDGSNTD…SKRTLGKRSV (64 aa)) form a disordered region. The stretch at 269–299 (KDSLTQALQRIQSLQDRLEESVNNTEKMRDS) forms a coiled coil.

This sequence belongs to the IPGA1 family.

The protein localises to the cytoplasm. Its subcellular location is the cytoskeleton. Its function is as follows. Microtubule-associated protein probably involved in the regulation of microtubule organization. The polypeptide is INCREASED PETAL GROWTH ANISOTROPY 1-like protein 1 (Arabidopsis thaliana (Mouse-ear cress)).